The primary structure comprises 423 residues: Histone deacetylase 14, chloroplastic (423 aa).

Residues 1-44 (MSMALIVRPFFVPGSAGISGSRNICKKNQWRKYLLKPSGSSINC) constitute a chloroplast transit peptide. Positions 62–392 (DARLIYSVSA…FRALLGEDSL (331 aa)) are histone deacetylase. His-202 serves as the catalytic Proton donor/acceptor. Residues Asp-239, His-241, and Asp-326 each contribute to the Zn(2+) site.

This sequence belongs to the histone deacetylase family. As to quaternary structure, interacts with PP2A2. Requires Zn(2+) as cofactor. As to expression, expressed in stems, leaves, flowers, siliques and mature seeds.

Its subcellular location is the nucleus. It is found in the cytoplasm. It localises to the plastid. The protein localises to the chloroplast stroma. The protein resides in the mitochondrion. The enzyme catalyses N-acetylserotonin + H2O = serotonin + acetate. The catalysed reaction is N-acetyltyramine + H2O = tyramine + acetate. It carries out the reaction N-acetyltryptamine + H2O = tryptamine + acetate. It catalyses the reaction melatonin + H2O = 5-methoxytryptamine + acetate. Its activity is regulated as follows. Its activity is inhibited by trichostatin A (TSA), a known histone deacetylase inhibitor. Functionally, regulates lysine acetylation levels of plastid proteins related to photosynthesis. Involved in the regulation of the activation state of RuBisCO, which is controlled by lysine acetylation of RuBisCO activase under low-light conditions. Associates with alpha- and beta-tubulins and deacetylate alpha-tubulin. Does not seem to be required for the cellular patterning in the root epidermis. Involved in the regulation of melatonin biosynthesis by catalyzing the deacetylation of N-acetylserotonin to produce serotonin. N-acetylserotonin is methylated by acetylserotonin O-methyltransferase (ASMT) to produce melatonin (N-acetyl-5-methoxytryptamine). Deacetylates melatonin to produce 5-methoxytryptamine. In vitro, deacetylates N-acetyltyramine and N-acetyltryptamine to produce tyramine and tryptamine, respectively. The chain is Histone deacetylase 14, chloroplastic from Arabidopsis thaliana (Mouse-ear cress).